Here is an 883-residue protein sequence, read N- to C-terminus: Alanine--tRNA ligase (883 aa).

Positions 562, 566, 664, and 668 each coordinate Zn(2+).

This sequence belongs to the class-II aminoacyl-tRNA synthetase family. Homotetramer. The cofactor is Zn(2+).

The protein localises to the cytoplasm. It carries out the reaction tRNA(Ala) + L-alanine + ATP = L-alanyl-tRNA(Ala) + AMP + diphosphate. Catalyzes the attachment of alanine to tRNA(Ala) in a two-step reaction: alanine is first activated by ATP to form Ala-AMP and then transferred to the acceptor end of tRNA(Ala). Also edits incorrectly charged Ser-tRNA(Ala) and Gly-tRNA(Ala) via its editing domain. The polypeptide is Alanine--tRNA ligase (Buchnera aphidicola subsp. Schizaphis graminum (strain Sg)).